The chain runs to 177 residues: Parathyroid hormone-related protein (177 aa).

Positions 1–24 (MLWRLVQQWSVAVFLLSYSVPSCG) are cleaved as a signal peptide. A propeptide spanning residues 25–34 (RSVEELGRRL) is cleaved from the precursor. The tract at residues 57 to 68 (RFFLHHLIAEIH) is important for receptor binding. A disordered region spans residues 74–149 (ATSEVSPNSK…KRRTRSAWLT (76 aa)). Residues 76–90 (SEVSPNSKPAPNTKN) are compositionally biased toward polar residues. The short motif at 108-129 (TNKVETYKEQPLKTPGKKKKSK) is the Nuclear localization signal element. Residues 109–118 (NKVETYKEQP) show a composition bias toward basic and acidic residues. Basic residues predominate over residues 122–132 (PGKKKKSKPGK).

This sequence belongs to the parathyroid hormone family. As to quaternary structure, PTHrP interacts with PTH1R (via N-terminal extracellular domain). Post-translationally, there are several secretory forms, including osteostatin, arising from endoproteolytic cleavage of the initial translation product. Each of these secretory forms is believed to have one or more of its own receptors that mediates the normal paracrine, autocrine and endocrine actions.

Its subcellular location is the secreted. The protein resides in the cytoplasm. It is found in the nucleus. Functionally, neuroendocrine peptide which is a critical regulator of cellular and organ growth, development, migration, differentiation and survival and of epithelial calcium ion transport. Acts by binding to its receptor, PTH1R, activating G protein-coupled receptor signaling. Regulates endochondral bone development and epithelial-mesenchymal interactions during the formation of the mammary glands and teeth. Required for skeletal homeostasis. Promotes mammary mesenchyme differentiation and bud outgrowth by modulating mesenchymal cell responsiveness to BMPs. Up-regulates BMPR1A expression in the mammary mesenchyme and this increases the sensitivity of these cells to BMPs and allows them to respond to BMP4 in a paracrine and/or autocrine fashion. BMP4 signaling in the mesenchyme, in turn, triggers epithelial outgrowth and augments MSX2 expression, which causes the mammary mesenchyme to inhibit hair follicle formation within the nipple sheath. Its function is as follows. Potent inhibitor of osteoclastic bone resorption. In Bos taurus (Bovine), this protein is Parathyroid hormone-related protein (PTHLH).